Reading from the N-terminus, the 412-residue chain is Multifunctional CCA protein (412 aa).

The ATP site is built by Gly8 and Arg11. CTP-binding residues include Gly8 and Arg11. 2 residues coordinate Mg(2+): Asp21 and Asp23. The ATP site is built by Arg91, Arg137, and Arg140. 3 residues coordinate CTP: Arg91, Arg137, and Arg140. The 102-residue stretch at 228-329 (TGIHTLMTLS…VKLFDSIDAW (102 aa)) folds into the HD domain.

This sequence belongs to the tRNA nucleotidyltransferase/poly(A) polymerase family. Bacterial CCA-adding enzyme type 1 subfamily. In terms of assembly, monomer. Can also form homodimers and oligomers. Requires Mg(2+) as cofactor. Ni(2+) is required as a cofactor.

The enzyme catalyses a tRNA precursor + 2 CTP + ATP = a tRNA with a 3' CCA end + 3 diphosphate. It carries out the reaction a tRNA with a 3' CCA end + 2 CTP + ATP = a tRNA with a 3' CCACCA end + 3 diphosphate. Its function is as follows. Catalyzes the addition and repair of the essential 3'-terminal CCA sequence in tRNAs without using a nucleic acid template. Adds these three nucleotides in the order of C, C, and A to the tRNA nucleotide-73, using CTP and ATP as substrates and producing inorganic pyrophosphate. tRNA 3'-terminal CCA addition is required both for tRNA processing and repair. Also involved in tRNA surveillance by mediating tandem CCA addition to generate a CCACCA at the 3' terminus of unstable tRNAs. While stable tRNAs receive only 3'-terminal CCA, unstable tRNAs are marked with CCACCA and rapidly degraded. The sequence is that of Multifunctional CCA protein from Escherichia coli O81 (strain ED1a).